The sequence spans 505 residues: Probable cytosol aminopeptidase (505 aa).

2 residues coordinate Mn(2+): lysine 268 and aspartate 273. Residue lysine 280 is part of the active site. The Mn(2+) site is built by aspartate 291, aspartate 350, and glutamate 352. Arginine 354 is an active-site residue.

Belongs to the peptidase M17 family. It depends on Mn(2+) as a cofactor.

The protein localises to the cytoplasm. It carries out the reaction Release of an N-terminal amino acid, Xaa-|-Yaa-, in which Xaa is preferably Leu, but may be other amino acids including Pro although not Arg or Lys, and Yaa may be Pro. Amino acid amides and methyl esters are also readily hydrolyzed, but rates on arylamides are exceedingly low.. The enzyme catalyses Release of an N-terminal amino acid, preferentially leucine, but not glutamic or aspartic acids.. Functionally, presumably involved in the processing and regular turnover of intracellular proteins. Catalyzes the removal of unsubstituted N-terminal amino acids from various peptides. The chain is Probable cytosol aminopeptidase from Syntrophobacter fumaroxidans (strain DSM 10017 / MPOB).